A 1733-amino-acid polypeptide reads, in one-letter code: DNA-directed RNA polymerase II subunit RPB1 (1733 aa).

Positions 67, 70, 77, 80, 107, 110, 148, and 167 each coordinate Zn(2+). Residues 248–260 (PSISFNESQRGED) are lid loop. Positions 306-323 (NDIAGQPQALQKSGRPVK) are rudder loop. Residues Asp-481, Asp-483, and Asp-485 each coordinate Mg(2+). Lys-695 is covalently cross-linked (Glycyl lysine isopeptide (Lys-Gly) (interchain with G-Cter in ubiquitin)). A bridging helix region spans residues 810–822 (PQEFFFHAMGGRE). Glycyl lysine isopeptide (Lys-Gly) (interchain with G-Cter in ubiquitin) cross-links involve residues Lys-1246 and Lys-1350. Thr-1471 carries the phosphothreonine modification. The tract at residues 1537 to 1733 (VSSPGFSPTS…QKHNENENSR (197 aa)) is disordered. The span at 1538 to 1719 (SSPGFSPTSP…YSPGSPAYSP (182 aa)) shows a compositional bias: low complexity. Repeat copies occupy residues 1549 to 1555 (YSPTSPA), 1556 to 1562 (YSPTSPS), 1563 to 1569 (YSPTSPS), 1570 to 1576 (YSPTSPS), 1577 to 1583 (YSPTSPS), 1584 to 1590 (YSPTSPS), 1591 to 1597 (YSPTSPS), 1598 to 1604 (YSPTSPS), 1605 to 1611 (YSPTSPS), 1612 to 1618 (YSPTSPS), 1619 to 1625 (YSPTSPS), 1626 to 1632 (YSPTSPS), 1633 to 1639 (YSPTSPS), 1640 to 1646 (YSPTSPS), 1647 to 1653 (YSPTSPS), 1654 to 1660 (YSPTSPA), 1661 to 1667 (YSPTSPS), 1668 to 1674 (YSPTSPS), 1675 to 1681 (YSPTSPS), 1682 to 1688 (YSPTSPS), 1689 to 1695 (YSPTSPN), 1696 to 1702 (YSPTSPS), and 1703 to 1709 (YSPTSPG). The tract at residues 1549-1716 (YSPTSPAYSP…SPGYSPGSPA (168 aa)) is C-terminal domain (CTD); 24 X 7 AA approximate tandem repeats of Y-S-P-T-S-P-[A-S-N-G]. The 24; approximate repeat unit spans residues 1710–1716 (YSPGSPA). The segment covering 1720–1733 (KQDEQKHNENENSR) has biased composition (basic and acidic residues).

Belongs to the RNA polymerase beta' chain family. As to quaternary structure, component of the RNA polymerase II (Pol II) complex consisting of 12 subunits. Interacts with DEF1; the interaction is direct and serves to bridge RPB1 to the Elongin complex in a DNA-damaged dependent manner. Interacts with the Elongin subunit ELA1. Interacts with the Elongin subunit ELC1. Interacts with ASK10. Interacts with ESS1. Interacts with RTT103. Interacts with SHE2. Post-translationally, the tandem 7 residues repeats in the C-terminal domain (CTD) can be highly phosphorylated. The phosphorylation activates Pol II. Phosphorylation occurs mainly at residues 'Ser-2' and 'Ser-5' of the heptapeptide repeat. The phosphorylated form of Pol II appears to carry, on average, one phosphate per repeat. The phosphorylation state is believed to result from the balanced action of site-specific CTD kinases and phosphatases, and a 'CTD code' that specifies the position of Pol II within the transcription cycle has been proposed. Phosphorylation at 'Ser-5' occurs in promoter-proximal regions in early elongation. Phosphorylation at 'Ser-2' predominates in regions more distal to the promoter and triggers binding of the 3' RNA processing machinery. CTD kinases include KIN28 (as part of the TFKII complex, a subcomplex of the TFIIH holo complex), SSN3/SRB10 (as part of the SRB8-11 complex, a module of the Mediator complex), CTK1 (as part of CTD kinase), and probably BUR1 (as part of the BUR1-BUR2 kinase complex). Phosphatases include FCP1 and SSU72. In terms of processing, following transcription stress, the elongating form of RNA polymerase II (RNA pol IIo) is polyubiquitinated via 'Lys-63'-linkages on Lys-1246 by the RSP5-UBA1-UBC5 complex at DNA damage sites without leading to degradation: ubiquitination promotes RNA pol IIo backtracking to allow access by the transcription-coupled nucleotide excision repair (TC-NER) machinery. Subsequent DEF1-dependent polyubiquitination by the elongin complex via 'Lys-48'-linkages may lead to proteasome-mediated degradation; presumably at stalled RNA pol II where TC-NER has failed, to halt global transcription and enable 'last resort' DNA repair pathways.

It localises to the nucleus. It catalyses the reaction RNA(n) + a ribonucleoside 5'-triphosphate = RNA(n+1) + diphosphate. Functionally, DNA-dependent RNA polymerase catalyzes the transcription of DNA into RNA using the four ribonucleoside triphosphates as substrates. Largest and catalytic component of RNA polymerase II which synthesizes mRNA precursors and many functional non-coding RNAs. Forms the polymerase active center together with the second largest subunit. Pol II is the central component of the basal RNA polymerase II transcription machinery. During a transcription cycle, Pol II, general transcription factors and the Mediator complex assemble as the preinitiation complex (PIC) at the promoter. 11-15 base pairs of DNA surrounding the transcription start site are melted and the single-stranded DNA template strand of the promoter is positioned deeply within the central active site cleft of Pol II to form the open complex. After synthesis of about 30 bases of RNA, Pol II releases its contacts with the core promoter and the rest of the transcription machinery (promoter clearance) and enters the stage of transcription elongation in which it moves on the template as the transcript elongates. Pol II appears to oscillate between inactive and active conformations at each step of nucleotide addition. Elongation is influenced by the phosphorylation status of the C-terminal domain (CTD) of Pol II largest subunit (RPB1), which serves as a platform for assembly of factors that regulate transcription initiation, elongation, termination and mRNA processing. Pol II is composed of mobile elements that move relative to each other. The core element with the central large cleft comprises RPB3, RBP10, RPB11, RPB12 and regions of RPB1 and RPB2 forming the active center. The clamp element (portions of RPB1, RPB2 and RPB3) is connected to the core through a set of flexible switches and moves to open and close the cleft. A bridging helix emanates from RPB1 and crosses the cleft near the catalytic site and is thought to promote translocation of Pol II by acting as a ratchet that moves the RNA-DNA hybrid through the active site by switching from straight to bent conformations at each step of nucleotide addition. In elongating Pol II, the lid loop (RPB1) appears to act as a wedge to drive apart the DNA and RNA strands at the upstream end of the transcription bubble and guide the RNA strand toward the RNA exit groove located near the base of the largely unstructured CTD domain of RPB1. The rudder loop (RPB1) interacts with single-stranded DNA after separation from the RNA strand, likely preventing reassociation with the exiting RNA. The cleft is surrounded by jaws: an upper jaw formed by portions of RBP1, RPB2 and RPB9, and a lower jaw, formed by RPB5 and portions of RBP1. The jaws are thought to grab the incoming DNA template, mainly by RPB5 direct contacts to DNA. This chain is DNA-directed RNA polymerase II subunit RPB1 (RPO21), found in Saccharomyces cerevisiae (strain ATCC 204508 / S288c) (Baker's yeast).